The primary structure comprises 84 residues: Beta-cardiotoxin CTX9 (84 aa).

An N-terminal signal peptide occupies residues 1 to 21 (MKTLLLTLVVVTIVCLDLGYT). Disulfide bonds link cysteine 24–cysteine 43, cysteine 36–cysteine 61, cysteine 65–cysteine 76, and cysteine 77–cysteine 82.

This sequence belongs to the three-finger toxin family. Short-chain subfamily. Aminergic toxin sub-subfamily. Expressed by the venom gland.

Its subcellular location is the secreted. Functionally, acts as a beta-blocker by binding to beta-1 and beta-2 adrenergic receptors (ADRB1 and ADRB2). It dose-dependently decreases the heart rate (bradycardia), whereas conventional cardiotoxins increases it. At 100 mg/kg, intraperitoneal injection into mice provokes labored breathing, impaired locomotion, lack of response to external stimuli, and death (after 30 minutes). In Ophiophagus hannah (King cobra), this protein is Beta-cardiotoxin CTX9.